The following is a 213-amino-acid chain: ATP-dependent dethiobiotin synthetase BioD (213 aa).

Residue 12–17 (EVGKTY) participates in ATP binding. Thr-16 lines the Mg(2+) pocket. The active site involves Lys-37. Residues Asp-46, 107–110 (EGVG), and 167–168 (NN) each bind ATP. Residues Asp-46 and Glu-107 each coordinate Mg(2+).

This sequence belongs to the dethiobiotin synthetase family. Homodimer. It depends on Mg(2+) as a cofactor.

It is found in the cytoplasm. The catalysed reaction is (7R,8S)-7,8-diammoniononanoate + CO2 + ATP = (4R,5S)-dethiobiotin + ADP + phosphate + 3 H(+). It participates in cofactor biosynthesis; biotin biosynthesis; biotin from 7,8-diaminononanoate: step 1/2. Functionally, catalyzes a mechanistically unusual reaction, the ATP-dependent insertion of CO2 between the N7 and N8 nitrogen atoms of 7,8-diaminopelargonic acid (DAPA, also called 7,8-diammoniononanoate) to form a ureido ring. The sequence is that of ATP-dependent dethiobiotin synthetase BioD from Akkermansia muciniphila (strain ATCC BAA-835 / DSM 22959 / JCM 33894 / BCRC 81048 / CCUG 64013 / CIP 107961 / Muc).